A 272-amino-acid polypeptide reads, in one-letter code: Methylsterol monooxygenase 2-1 (272 aa).

3 helical membrane-spanning segments follow: residues 24-44 (IGSFILHESVFFLSGLPYIFL), 72-94 (LLLYHCCVNLPLMMASYPVFRFM), and 107-127 (VVSAQILFYFIIEDFVFYWGH). The 147-residue stretch at 113–259 (LFYFIIEDFV…FVYMDWIFGT (147 aa)) folds into the Fatty acid hydroxylase domain. The Histidine box-1 motif lies at 127–131 (HRILH). Positions 140–144 (HSVHH) match the Histidine box-2 motif. 2 helical membrane-spanning segments follow: residues 162-182 (ILFLGFATIVGPALTGPHLIT) and 209-229 (NFLPLYGGSLILMWESFAYSA). Positions 231 to 237 (FHDYHHR) match the Histidine box-3 motif.

This sequence belongs to the sterol desaturase family. Requires Fe cation as cofactor. Strongly expressed in leaves, flowers, siliques and developing seeds.

It is found in the endoplasmic reticulum membrane. It catalyses the reaction 4,4-dimethyl-5alpha-cholest-7-en-3beta-ol + 6 Fe(II)-[cytochrome b5] + 3 O2 + 5 H(+) = 4alpha-carboxy-4beta-methyl-5alpha-cholest-7-ene-3beta-ol + 6 Fe(III)-[cytochrome b5] + 4 H2O. It carries out the reaction 24-methylidenelophenol + 6 Fe(II)-[cytochrome b5] + 3 O2 + 5 H(+) = 4alpha-carboxy-ergosta-7,24(24(1))-dien-3beta-ol + 6 Fe(III)-[cytochrome b5] + 4 H2O. Its function is as follows. Non-heme iron oxygenase involved in sterols biosynthesis by catalyzing the removal of the second methyl group at the C-4 position. 24-ethylidenelophenol and 24-ethyllophenol are the preferred substrates. Together with SMO2-2, required during embryogenesis, probably by maintaining sterols and auxin homeostasis. In Arabidopsis thaliana (Mouse-ear cress), this protein is Methylsterol monooxygenase 2-1.